We begin with the raw amino-acid sequence, 192 residues long: Glycerol-3-phosphate acyltransferase (192 aa).

The next 5 helical transmembrane spans lie at 5-25, 50-70, 78-98, 112-132, and 153-173; these read VVLI…ITRI, FLAA…VYIA, DFYI…PIWL, ILIA…IIVF, and SFFF…LVFL.

The protein belongs to the PlsY family. In terms of assembly, probably interacts with PlsX.

The protein resides in the cell membrane. It catalyses the reaction an acyl phosphate + sn-glycerol 3-phosphate = a 1-acyl-sn-glycero-3-phosphate + phosphate. It functions in the pathway lipid metabolism; phospholipid metabolism. In terms of biological role, catalyzes the transfer of an acyl group from acyl-phosphate (acyl-PO(4)) to glycerol-3-phosphate (G3P) to form lysophosphatidic acid (LPA). This enzyme utilizes acyl-phosphate as fatty acyl donor, but not acyl-CoA or acyl-ACP. This is Glycerol-3-phosphate acyltransferase from Wolbachia pipientis wMel.